Here is a 203-residue protein sequence, read N- to C-terminus: MKREGVLYILSAPSGAGKTTLCREIIDIFPQLRHSVSYTTRTPRPGEIHGKDYFFVSMDEFHRMIDADEFAEWAEVHGNCYGTSIRTLEENRAAGVDLILDIDIQGARQLQERFAGGVYIFILPPSFEELRRRLNGRSSDSDEVISRRINAAAGEIRESRWYDYIIVNDQFSRAVEELKSVIIAEQCRTARVLDAVSEIFSMD.

The region spanning 5–183 is the Guanylate kinase-like domain; it reads GVLYILSAPS…AVEELKSVII (179 aa). 12 to 19 serves as a coordination point for ATP; sequence APSGAGKT.

The protein belongs to the guanylate kinase family.

The protein resides in the cytoplasm. It carries out the reaction GMP + ATP = GDP + ADP. In terms of biological role, essential for recycling GMP and indirectly, cGMP. This Geobacter sulfurreducens (strain ATCC 51573 / DSM 12127 / PCA) protein is Guanylate kinase.